A 1091-amino-acid chain; its full sequence is Leucine--tRNA ligase, cytoplasmic (1091 aa).

A 'HIGH' region motif is present at residues 53 to 63; the sequence is PYMNGYLHIGH. Positions 715-719 match the 'KMSKS' region motif; sequence KMSKS. An ATP-binding site is contributed by lysine 718.

Belongs to the class-I aminoacyl-tRNA synthetase family.

It is found in the cytoplasm. Its subcellular location is the cytosol. The catalysed reaction is tRNA(Leu) + L-leucine + ATP = L-leucyl-tRNA(Leu) + AMP + diphosphate. Catalyzes the specific attachment of an amino acid to its cognate tRNA in a two step reaction: the amino acid (AA) is first activated by ATP to form AA-AMP and then transferred to the acceptor end of the tRNA. This is Leucine--tRNA ligase, cytoplasmic from Arabidopsis thaliana (Mouse-ear cress).